The primary structure comprises 345 residues: GDSL esterase/lipase At1g23500 (345 aa).

An N-terminal signal peptide occupies residues 1 to 24; the sequence is MNFSLLSTMLMALSSVCLFFVGYA. Ser42 (nucleophile) is an active-site residue. Asn103 carries N-linked (GlcNAc...) asparagine glycosylation. Active-site residues include Asp320 and His323.

This sequence belongs to the 'GDSL' lipolytic enzyme family.

Its subcellular location is the secreted. The polypeptide is GDSL esterase/lipase At1g23500 (Arabidopsis thaliana (Mouse-ear cress)).